The primary structure comprises 335 residues: Biotin synthase (335 aa).

In terms of domain architecture, Radical SAM core spans 51–278 (NTVQLSSLLS…LAKVRLSAGR (228 aa)). [4Fe-4S] cluster is bound by residues Cys-66, Cys-70, and Cys-73. 4 residues coordinate [2Fe-2S] cluster: Cys-110, Cys-141, Cys-201, and Arg-273.

Belongs to the radical SAM superfamily. Biotin synthase family. As to quaternary structure, homodimer. Requires [4Fe-4S] cluster as cofactor. [2Fe-2S] cluster serves as cofactor.

The enzyme catalyses (4R,5S)-dethiobiotin + (sulfur carrier)-SH + 2 reduced [2Fe-2S]-[ferredoxin] + 2 S-adenosyl-L-methionine = (sulfur carrier)-H + biotin + 2 5'-deoxyadenosine + 2 L-methionine + 2 oxidized [2Fe-2S]-[ferredoxin]. Its pathway is cofactor biosynthesis; biotin biosynthesis; biotin from 7,8-diaminononanoate: step 2/2. In terms of biological role, catalyzes the conversion of dethiobiotin (DTB) to biotin by the insertion of a sulfur atom into dethiobiotin via a radical-based mechanism. In Bordetella pertussis (strain Tohama I / ATCC BAA-589 / NCTC 13251), this protein is Biotin synthase.